The primary structure comprises 237 residues: tRNA1(Val) (adenine(37)-N6)-methyltransferase (237 aa).

Belongs to the methyltransferase superfamily. tRNA (adenine-N(6)-)-methyltransferase family.

It is found in the cytoplasm. It catalyses the reaction adenosine(37) in tRNA1(Val) + S-adenosyl-L-methionine = N(6)-methyladenosine(37) in tRNA1(Val) + S-adenosyl-L-homocysteine + H(+). Specifically methylates the adenine in position 37 of tRNA(1)(Val) (anticodon cmo5UAC). This Pasteurella multocida (strain Pm70) protein is tRNA1(Val) (adenine(37)-N6)-methyltransferase.